The primary structure comprises 221 residues: Protein myomaker (221 aa).

Residues 1–3 (MGT) are Extracellular-facing. The chain crosses the membrane as a helical span at residues 4–24 (VVAKLLLPTLSSLAFLPTVSI). Over 25–29 (ATKRR) the chain is Cytoplasmic. A helical membrane pass occupies residues 30–50 (FYMEAMVYLFTMFFVAFSHAC). The Extracellular portion of the chain corresponds to 51 to 64 (DGPGLSVLCFMRRD). A helical membrane pass occupies residues 65 to 85 (ILEYFSIYGTALSMWVSLMAL). At 86 to 93 (ADFDEPQR) the chain is on the cytoplasmic side. Residues 94-110 (STFTMLGVLTIAVRTFH) traverse the membrane as a helical segment. Residues 111 to 113 (DRW) lie on the Extracellular side of the membrane. A helical membrane pass occupies residues 114 to 134 (GYGVYSGPIGTATLIIAVKWL). Over 135–153 (KKMKEKKGLYPDKSIYTQQ) the chain is Cytoplasmic. Residues 154–174 (IGPGLCFGALALMLRFFFEEW) form a helical membrane-spanning segment. Position 175 (aspartate 175) is a topological domain, extracellular. A helical membrane pass occupies residues 176–196 (YTYVHSFYHCALAMSFVLLLP). Residues 197–221 (KVNKKAGNAGAPAKLTFSTLCCTCV) lie on the Cytoplasmic side of the membrane. 2 S-palmitoyl cysteine lipidation sites follow: cysteine 217 and cysteine 218.

Belongs to the TMEM8 family. In terms of assembly, interacts with MYMX. Post-translationally, palmitoylated at the C-terminus; palmitoylation promotes localization to the Golgi apparatus. Specifically expressed in skeletal muscle during embryogenesis and adult muscle regeneration.

The protein localises to the cell membrane. It is found in the golgi apparatus membrane. Functionally, myoblast-specific protein that mediates myoblast fusion, an essential step for the formation of multi-nucleated muscle fibers. Actively participates in the membrane fusion reaction by mediating the mixing of cell membrane lipids (hemifusion) upstream of MYMX. Acts independently of MYMX. Involved in skeletal muscle regeneration in response to injury by mediating the fusion of satellite cells, a population of muscle stem cells, with injured myofibers. Also involved in skeletal muscle hypertrophy, probably by mediating the fusion of satellite cells with myofibers. In Mus musculus (Mouse), this protein is Protein myomaker.